Here is a 394-residue protein sequence, read N- to C-terminus: MSGEDEQQEQTIAEDLVVTKYKMGGDIANRVLRSLVEASSSGVSVLSLCEKGDAMIMEETGKIFKKEKEMKKGIAFPTSISVNNCVCHFSPLKSDQDYILKEGDLVKIDLGVHVDGFIANVAHTFVIGVAQGSQVTGRKADVIKAAHLCAEAALRLVKPGNQNTQVTEAWNKVAHSFNCTPIEGMLSHQLKQHVIDGEKTIIQNPTDQQKKDHEKAEFEVHEVYAVDVLVSSGEGKAKDAGQRTTIYKRDPSKQYGLKMKTSRAFFSEVERRFDAMPFTLRAFEDEKKARMGVVECAKHELLQPFNVLYEKEGEFVAQFKFTVLLMPNGPMRITSGPFEPDLYKSEMEVQDAELKALLQSSASRKTQKKKKKKASKTAENATSGETLEENGAGD.

An N-acetylserine modification is found at S2. Residue S2 is modified to Phosphoserine. A necessary for nucleolar localization region spans residues 2–48 (SGEDEQQEQTIAEDLVVTKYKMGGDIANRVLRSLVEASSSGVSVLSL). The RNA-binding stretch occupies residues 46 to 54 (LSLCEKGDA). Residue K298 forms a Glycyl lysine isopeptide (Lys-Gly) (interchain with G-Cter in SUMO2) linkage. The interval 301–394 (LLQPFNVLYE…ETLEENGAGD (94 aa)) is necessary for nucleolar localization. S335 is modified (phosphoserine). The segment at 358-394 (LQSSASRKTQKKKKKKASKTAENATSGETLEENGAGD) is disordered. S361 is modified (phosphoserine; by PKC/PRKCD). An interaction with RNA region spans residues 361-375 (SASRKTQKKKKKKAS). Residues 365-375 (KTQKKKKKKAS) show a composition bias toward basic residues. Residues T366 and T386 each carry the phosphothreonine modification.

It belongs to the peptidase M24 family. In terms of assembly, isoform 2 interacts with the cytoplasmic domain of non-phosphorylated ERBB3; the interaction requires PKC activity. Interacts with AR. Treatment with HRG leads to dissociation from ERBB3 and increases association with AR. Interacts with nucleolin/NCL. Component of a ribonucleoprotein complex containing at least PA2G4, NCL, TOP1, PABPC2, RPLP0, acetylated histone H1 (HIST1H1A or H1F1), histone H1 2/4, RPL4, RPL8, RPL15, RPL18, RPL18A, RPL21, RPL11, RPL12, RPL28, RPL27, RPLP2 and RPL24. Interacts with HDAC2. Interacts with RB1; the interaction is enhanced upon PA2G4 dephosphorylation. Isoform 1 and isoform 2 interact with RNF20. Isoform 2 interacts with HUWE1. Interacts with AKT1. Interacts with DNAJC21. In terms of processing, phosphorylated on serine and threonine residues. Phosphorylation is enhanced by HRG treatment. Basal phosphorylation is PKC-dependent and HRG-induced phosphorylation is predominantly PKC-independent. Phosphorylation at Ser-361 by PKC/PRKCD regulates its nucleolar localization. Post-translationally, isoform 2 is polyubiquitinated, leading to proteasomal degradation and phosphorylation by PKC/PRKCD enhances polyubiquitination.

It localises to the cytoplasm. It is found in the nucleus. The protein localises to the nucleolus. In terms of biological role, may play a role in a ERBB3-regulated signal transduction pathway. Seems be involved in growth regulation. Acts a corepressor of the androgen receptor (AR) and is regulated by the ERBB3 ligand neuregulin-1/heregulin (HRG). Inhibits transcription of some E2F1-regulated promoters, probably by recruiting histone acetylase (HAT) activity. Binds RNA. Associates with 28S, 18S and 5.8S mature rRNAs, several rRNA precursors and probably U3 small nucleolar RNA. May be involved in regulation of intermediate and late steps of rRNA processing. May be involved in ribosome assembly. Mediates cap-independent translation of specific viral IRESs (internal ribosomal entry site). Together with PTBP1 is required for the translation initiation on the foot-and-mouth disease virus (FMDV) IRES. Regulates cell proliferation, differentiation, and survival. Isoform 1 suppresses apoptosis whereas isoform 2 promotes cell differentiation. The sequence is that of Proliferation-associated protein 2G4 (Pa2g4) from Rattus norvegicus (Rat).